The chain runs to 158 residues: Small ribosomal subunit protein uS7 (158 aa).

It belongs to the universal ribosomal protein uS7 family. In terms of assembly, part of the 30S ribosomal subunit. Contacts proteins S9 and S11.

In terms of biological role, one of the primary rRNA binding proteins, it binds directly to 16S rRNA where it nucleates assembly of the head domain of the 30S subunit. Is located at the subunit interface close to the decoding center, probably blocks exit of the E-site tRNA. This chain is Small ribosomal subunit protein uS7, found in Phocaeicola vulgatus (strain ATCC 8482 / DSM 1447 / JCM 5826 / CCUG 4940 / NBRC 14291 / NCTC 11154) (Bacteroides vulgatus).